We begin with the raw amino-acid sequence, 394 residues long: Elongation factor Tu (394 aa).

One can recognise a tr-type G domain in the interval 10-204 (KPHVNIGTIG…AVDSYIPQPI (195 aa)). The segment at 19 to 26 (GHVDHGKT) is G1. Residue 19–26 (GHVDHGKT) coordinates GTP. Residue Thr26 participates in Mg(2+) binding. The interval 60–64 (GITIS) is G2. The G3 stretch occupies residues 81-84 (DCPG). GTP-binding positions include 81–85 (DCPGH) and 136–139 (NKVD). Positions 136 to 139 (NKVD) are G4. The interval 174–176 (SAL) is G5.

Belongs to the TRAFAC class translation factor GTPase superfamily. Classic translation factor GTPase family. EF-Tu/EF-1A subfamily. In terms of assembly, monomer.

Its subcellular location is the cytoplasm. It carries out the reaction GTP + H2O = GDP + phosphate + H(+). Functionally, GTP hydrolase that promotes the GTP-dependent binding of aminoacyl-tRNA to the A-site of ribosomes during protein biosynthesis. This is Elongation factor Tu from Rickettsia prowazekii (strain Madrid E).